The following is a 146-amino-acid chain: Hemoglobin subunit beta (146 aa).

Valine 1 carries the post-translational modification N-acetylvaline. The Globin domain maps to histidine 2 to histidine 146. Histidine 63 is a binding site for heme b. Lysine 82 is subject to N6-acetyllysine. Histidine 92 is a binding site for heme b. Cysteine 93 bears the S-nitrosocysteine mark. The residue at position 144 (lysine 144) is an N6-acetyllysine.

It belongs to the globin family. As to quaternary structure, heterotetramer of two alpha chains and two beta chains. As to expression, red blood cells.

Functionally, involved in oxygen transport from the lung to the various peripheral tissues. The sequence is that of Hemoglobin subunit beta (HBB) from Microtus xanthognathus (Yellow-cheeked vole).